The primary structure comprises 263 residues: Phosphatidylglycerol--prolipoprotein diacylglyceryl transferase (263 aa).

3 helical membrane-spanning segments follow: residues 17–37 (LSVR…IFLG), 56–76 (LLFY…VLFY), and 88–108 (IFAV…VLVA). Arg139 contacts a 1,2-diacyl-sn-glycero-3-phospho-(1'-sn-glycerol). A run of 2 helical transmembrane segments spans residues 176–196 (QLYH…WFTA) and 236–256 (ISMG…MVVF).

It belongs to the Lgt family.

The protein localises to the cell inner membrane. It catalyses the reaction L-cysteinyl-[prolipoprotein] + a 1,2-diacyl-sn-glycero-3-phospho-(1'-sn-glycerol) = an S-1,2-diacyl-sn-glyceryl-L-cysteinyl-[prolipoprotein] + sn-glycerol 1-phosphate + H(+). It participates in protein modification; lipoprotein biosynthesis (diacylglyceryl transfer). Functionally, catalyzes the transfer of the diacylglyceryl group from phosphatidylglycerol to the sulfhydryl group of the N-terminal cysteine of a prolipoprotein, the first step in the formation of mature lipoproteins. The sequence is that of Phosphatidylglycerol--prolipoprotein diacylglyceryl transferase from Dechloromonas aromatica (strain RCB).